Reading from the N-terminus, the 593-residue chain is Pyruvate decarboxylase 1 (593 aa).

Polar residues predominate over residues 1–19 (METETETPNGSTPCPTSAP). Residues 1-20 (METETETPNGSTPCPTSAPS) form a disordered region. Residues aspartate 55 and histidine 142 each contribute to the substrate site. Residues 420–502 (DSWFNCQKLR…FLINNGGYTI (83 aa)) are thiamine pyrophosphate binding. Mg(2+)-binding residues include aspartate 470, asparagine 497, and glycine 499. Glutamate 503 provides a ligand contact to substrate.

Belongs to the TPP enzyme family. As to quaternary structure, homotetramer. Requires a metal cation as cofactor. It depends on thiamine diphosphate as a cofactor.

The catalysed reaction is a 2-oxocarboxylate + H(+) = an aldehyde + CO2. This Pisum sativum (Garden pea) protein is Pyruvate decarboxylase 1 (PDC1).